A 371-amino-acid polypeptide reads, in one-letter code: tRNA-specific 2-thiouridylase MnmA (371 aa).

Residues 16-23 (GMSGGVDS) and methionine 42 contribute to the ATP site. The tract at residues 102–104 (NPD) is interaction with target base in tRNA. The Nucleophile role is filled by cysteine 107. Residues cysteine 107 and cysteine 204 are joined by a disulfide bond. Glycine 132 serves as a coordination point for ATP. Positions 154–156 (KDQ) are interaction with tRNA. The Cysteine persulfide intermediate role is filled by cysteine 204. The interaction with tRNA stretch occupies residues 316 to 317 (RY).

This sequence belongs to the MnmA/TRMU family.

The protein localises to the cytoplasm. It carries out the reaction S-sulfanyl-L-cysteinyl-[protein] + uridine(34) in tRNA + AH2 + ATP = 2-thiouridine(34) in tRNA + L-cysteinyl-[protein] + A + AMP + diphosphate + H(+). Functionally, catalyzes the 2-thiolation of uridine at the wobble position (U34) of tRNA, leading to the formation of s(2)U34. This is tRNA-specific 2-thiouridylase MnmA from Shewanella halifaxensis (strain HAW-EB4).